The primary structure comprises 311 residues: Fluoride export protein 1 (311 aa).

At 1–6 (MLLTQS) the chain is on the cytoplasmic side. Residues 7-25 (YFCIMSMLGTLARLGLTAL) form a helical membrane-spanning segment. Residues 26–29 (NTYP) lie on the Extracellular side of the membrane. Residues 30-50 (GAPFSGLLWVQFVGCVIMGFC) traverse the membrane as a helical segment. Residues 51-65 (QTESVFFPRPKHNAT) are Cytoplasmic-facing. A helical transmembrane segment spans residues 66 to 86 (FLLAITTGFCGSLTTFSSWML). The Extracellular segment spans residues 87-106 (QMFTGMANLDPFERRGRGYS). The helical transmembrane segment at 107 to 127 (FLSVVSDFMVTMCIAMSSLIW) threads the bilayer. Over 128–154 (GKQIGKTTGQWRIGKVAFAWPIPAHTH) the chain is Cytoplasmic. Residues 155–175 (IVVRVLLLLLSICFFVGAAFY) form a helical membrane-spanning segment. Residues 176 to 186 (TAYTTNVTHRG) are Extracellular-facing. An N-linked (GlcNAc...) asparagine glycan is attached at Asn-181. The chain crosses the membrane as a helical span at residues 187 to 207 (IGFSLIFSPFAALTRLYLARF). Residues 208–212 (LNSPQ) lie on the Cytoplasmic side of the membrane. A helical membrane pass occupies residues 213–233 (YFIPYGTLCANVFATLLLSIM). The Extracellular segment spans residues 234 to 250 (YMIPQITHCTPVSRSVM). Residues 251 to 268 (YGIQNGFCAVLSTLSTFS) form a helical membrane-spanning segment. Residues 269–278 (NELHTMPIKR) lie on the Cytoplasmic side of the membrane. A helical transmembrane segment spans residues 279 to 299 (AYIYCIISVAISFSICVIVDG). The Extracellular portion of the chain corresponds to 300–311 (ATAWGHGYTEKY).

The protein belongs to the fluoride channel Fluc/FEX (TC 1.A.43) family.

The protein localises to the cell membrane. It catalyses the reaction fluoride(in) = fluoride(out). Its function is as follows. Fluoride channel required for the rapid expulsion of cytoplasmic fluoride. In Schizosaccharomyces pombe (strain 972 / ATCC 24843) (Fission yeast), this protein is Fluoride export protein 1 (fex1).